A 380-amino-acid chain; its full sequence is Cysteine protease ATG4A (380 aa).

C60 (nucleophile) is an active-site residue. Residues D262 and H264 contribute to the active site. The short motif at F375–L378 is the LIR element.

The protein belongs to the peptidase C54 family.

It localises to the cytoplasm. The enzyme catalyses [protein]-C-terminal L-amino acid-glycyl-phosphatidylethanolamide + H2O = [protein]-C-terminal L-amino acid-glycine + a 1,2-diacyl-sn-glycero-3-phosphoethanolamine. In terms of biological role, cysteine protease that plays a key role in autophagy by mediating both proteolytic activation and delipidation of ATG8 family proteins. The protease activity is required for proteolytic activation of ATG8 family proteins: cleaves the C-terminal amino acid of ATG8 proteins to reveal a C-terminal glycine. Exposure of the glycine at the C-terminus is essential for ATG8 proteins conjugation to phosphatidylethanolamine (PE) and insertion to membranes, which is necessary for autophagy. Protease activity is also required to counteract formation of high-molecular weight conjugates of ATG8 proteins (ATG8ylation): acts as a deubiquitinating-like enzyme that removes ATG8 conjugated to other proteins, such as ATG3. In addition to the protease activity, also mediates delipidation of ATG8 family proteins. Catalyzes delipidation of PE-conjugated forms of ATG8 proteins during macroautophagy. This chain is Cysteine protease ATG4A, found in Gallus gallus (Chicken).